Here is a 45-residue protein sequence, read N- to C-terminus: Large ribosomal subunit protein bL34 (45 aa).

Residues 23–45 (ETPGGKKVLSARRAKGRKNLIAK) are disordered. Basic residues predominate over residues 31 to 45 (LSARRAKGRKNLIAK).

It belongs to the bacterial ribosomal protein bL34 family.

This Elusimicrobium minutum (strain Pei191) protein is Large ribosomal subunit protein bL34.